A 243-amino-acid polypeptide reads, in one-letter code: UPF0246 protein SpyM3_1790 (243 aa).

It belongs to the UPF0246 family.

This chain is UPF0246 protein SpyM3_1790, found in Streptococcus pyogenes serotype M3 (strain ATCC BAA-595 / MGAS315).